The chain runs to 166 residues: MSKRIAVYPGSFDPITNGHLDIILRGLNIFDELIVAVAHNVAKTGLFSIDERLDLIRETVKDYPQVRVDTFKGLLVDYLTRQNARIVLRGLRAVSDFENEFQLAQMNHTMNTQLETLFMMTSVSYGYLSSSIVKEVAAWGGDIDDFVPPCVKDALKTKFPDAPRID.

A substrate-binding site is contributed by serine 11. ATP contacts are provided by residues 11–12 (SF) and histidine 19. Residues lysine 43, leucine 75, and arginine 89 each contribute to the substrate site. ATP contacts are provided by residues 90-92 (GLR), glutamate 100, and 125-131 (YGYLSSS).

This sequence belongs to the bacterial CoaD family. In terms of assembly, homohexamer. It depends on Mg(2+) as a cofactor.

It localises to the cytoplasm. The enzyme catalyses (R)-4'-phosphopantetheine + ATP + H(+) = 3'-dephospho-CoA + diphosphate. It participates in cofactor biosynthesis; coenzyme A biosynthesis; CoA from (R)-pantothenate: step 4/5. Reversibly transfers an adenylyl group from ATP to 4'-phosphopantetheine, yielding dephospho-CoA (dPCoA) and pyrophosphate. In Syntrophotalea carbinolica (strain DSM 2380 / NBRC 103641 / GraBd1) (Pelobacter carbinolicus), this protein is Phosphopantetheine adenylyltransferase.